The following is a 546-amino-acid chain: T-complex protein 1 subunit zeta (546 aa).

N-acetylserine is present on Ser-2. Ser-249 is modified (phosphoserine).

It belongs to the TCP-1 chaperonin family. Heterooligomeric complex of about 850 to 900 kDa that forms two stacked rings, 12 to 16 nm in diameter.

The protein localises to the cytoplasm. Its function is as follows. Molecular chaperone; assists the folding of proteins upon ATP hydrolysis. Known to play a role, in vitro, in the folding of actin and tubulin. In yeast may play a role in mitotic spindle formation. The protein is T-complex protein 1 subunit zeta (CCT6) of Saccharomyces cerevisiae (strain ATCC 204508 / S288c) (Baker's yeast).